Consider the following 427-residue polypeptide: Phosphoribosylamine--glycine ligase (427 aa).

One can recognise an ATP-grasp domain in the interval 109 to 313 (RNLMAEYKIE…LAEVVTGITE (205 aa)). 136 to 191 (VRDHDGDLAVKPIGLTGGKGVRIMGEQVDRAGAIEYIREINGGVVLEERLTGEEFT) lines the ATP pocket. 3 residues coordinate Mg(2+): Gln-271, Glu-283, and Asn-285. Mn(2+) contacts are provided by Gln-271, Glu-283, and Asn-285.

Belongs to the GARS family. It depends on Mg(2+) as a cofactor. Mn(2+) serves as cofactor.

It carries out the reaction 5-phospho-beta-D-ribosylamine + glycine + ATP = N(1)-(5-phospho-beta-D-ribosyl)glycinamide + ADP + phosphate + H(+). It functions in the pathway purine metabolism; IMP biosynthesis via de novo pathway; N(1)-(5-phospho-D-ribosyl)glycinamide from 5-phospho-alpha-D-ribose 1-diphosphate: step 2/2. This chain is Phosphoribosylamine--glycine ligase, found in Methanoregula boonei (strain DSM 21154 / JCM 14090 / 6A8).